The sequence spans 285 residues: MAVKILTDSTSCMNNDLINKFHINLVSLSVSFDDESFKEKDISNEVFYEKMNEKGIPKSSQPSIEDLCSVMEEVVSVGDELLCIFISSDMSGTYSTAHIARDMVIEKYKDAKIEILDSRSNCMQLGFAAISAARAAMDGKSLEEVKLAAEENMKKSRFLFIPDNLVYLKKGGRIGGAGALIGNLLKIIPILTVEDGKTSVFAKIRTKKRAVETMVQRVLEDTDKFGMGGIAVHHINCYDEAKRLAETIKNKFKVDPIICDIGPVIGLHVGPGAIGIAYYTEKNMR.

Residues 3–280 (VKILTDSTSC…PGAIGIAYYT (278 aa)) enclose the DegV domain. Hexadecanoate contacts are provided by S59 and S91.

May bind long-chain fatty acids, such as palmitate, and may play a role in lipid transport or fatty acid metabolism. This chain is DegV domain-containing protein CA_C3284, found in Clostridium acetobutylicum (strain ATCC 824 / DSM 792 / JCM 1419 / IAM 19013 / LMG 5710 / NBRC 13948 / NRRL B-527 / VKM B-1787 / 2291 / W).